The chain runs to 111 residues: Cornifelin homolog (111 aa).

The protein belongs to the cornifelin family.

The sequence is that of Cornifelin homolog (cnfn) from Xenopus tropicalis (Western clawed frog).